A 331-amino-acid polypeptide reads, in one-letter code: MAEADTERRPHIPVLLRPLLAAVAPVEGTWLDGTFGAGGYARGLLEAGADRVIGVDRDPLALKMASGWAGDYGDRLRLVAGTFSQLDSHAGAPLDGVVLDLGVSSMQLDLAERGFSFQKDGPLDMRMSQEGESAADLVNTASEETLADILYHYGEERASRRIARAIVEARAAAPITRTLALAEIVARCLPRPKPGQMHPATRSFQAIRIAVNAEFSELVEGLEAAERALRPGGRLAVVTFHSLEDRIVKRFLQLRSGGEGQGNRYAPETRADAPRFTLPLRRAISPDEAELAENPRARSARLRVGVRTDAPAGKVDPQALGTPLIPKKGRR.

S-adenosyl-L-methionine-binding positions include 38 to 40 (GGY), D56, F83, D100, and Q107. The segment at 287–331 (DEAELAENPRARSARLRVGVRTDAPAGKVDPQALGTPLIPKKGRR) is disordered.

It belongs to the methyltransferase superfamily. RsmH family.

It is found in the cytoplasm. The catalysed reaction is cytidine(1402) in 16S rRNA + S-adenosyl-L-methionine = N(4)-methylcytidine(1402) in 16S rRNA + S-adenosyl-L-homocysteine + H(+). Functionally, specifically methylates the N4 position of cytidine in position 1402 (C1402) of 16S rRNA. In Cereibacter sphaeroides (strain ATCC 17023 / DSM 158 / JCM 6121 / CCUG 31486 / LMG 2827 / NBRC 12203 / NCIMB 8253 / ATH 2.4.1.) (Rhodobacter sphaeroides), this protein is Ribosomal RNA small subunit methyltransferase H.